A 257-amino-acid chain; its full sequence is Cytochrome c oxidase subunit 3 (257 aa).

A run of 6 helical transmembrane segments spans residues 13 to 33 (PWPITSSISALSLTLGFVSYF), 36 to 56 (LSMYLILLAVLMITISSFQWW), 80 to 100 (GMILFILSEVFFFVSFFWAFF), 154 to 174 (YISALNSLLITILLGVAFTMF), 195 to 215 (FFMTTGFHGLHVLIGSIFLLV), and 237 to 257 (AWYWHFVDVVWLFLFTFMYWW).

This sequence belongs to the cytochrome c oxidase subunit 3 family. In terms of assembly, component of the cytochrome c oxidase (complex IV, CIV), a multisubunit enzyme composed of a catalytic core of 3 subunits and several supernumerary subunits. The complex exists as a monomer or a dimer and forms supercomplexes (SCs) in the inner mitochondrial membrane with ubiquinol-cytochrome c oxidoreductase (cytochrome b-c1 complex, complex III, CIII).

The protein resides in the mitochondrion inner membrane. It catalyses the reaction 4 Fe(II)-[cytochrome c] + O2 + 8 H(+)(in) = 4 Fe(III)-[cytochrome c] + 2 H2O + 4 H(+)(out). Its function is as follows. Component of the cytochrome c oxidase, the last enzyme in the mitochondrial electron transport chain which drives oxidative phosphorylation. The respiratory chain contains 3 multisubunit complexes succinate dehydrogenase (complex II, CII), ubiquinol-cytochrome c oxidoreductase (cytochrome b-c1 complex, complex III, CIII) and cytochrome c oxidase (complex IV, CIV), that cooperate to transfer electrons derived from NADH and succinate to molecular oxygen, creating an electrochemical gradient over the inner membrane that drives transmembrane transport and the ATP synthase. Cytochrome c oxidase is the component of the respiratory chain that catalyzes the reduction of oxygen to water. Electrons originating from reduced cytochrome c in the intermembrane space (IMS) are transferred via the dinuclear copper A center (CU(A)) of subunit 2 and heme A of subunit 1 to the active site in subunit 1, a binuclear center (BNC) formed by heme A3 and copper B (CU(B)). The BNC reduces molecular oxygen to 2 water molecules using 4 electrons from cytochrome c in the IMS and 4 protons from the mitochondrial matrix. The protein is Cytochrome c oxidase subunit 3 (COIII) of Rhipicephalus sanguineus (Brown dog tick).